The following is an 887-amino-acid chain: CWF19-like protein 2 (887 aa).

The interval 1-143 (MEAFSVRFES…DKRTEEECDS (143 aa)) is disordered. Residues 11-103 (ASSIEERKEQ…KKQKCQKQSE (93 aa)) adopt a coiled-coil conformation. A compositionally biased stretch (basic and acidic residues) spans 14–72 (IEERKEQTRNARAEVLRQAKHNFEKEQRGEERKRLRDEDTWMLPDVHERIEQFSQEHSE). Ser-71 is subject to Phosphoserine. Positions 73–98 (KKKKKKDKHSKKVKKEKKKKRKKQKC) are enriched in basic residues. Positions 99–110 (QKQSESTDSSAS) are enriched in low complexity. Basic and acidic residues predominate over residues 124-143 (SDKEKTWKVKDKRTEEECDS). Residues 164–254 (SSSLKAEKET…RNFEDIVAEK (91 aa)) adopt a coiled-coil conformation. Residue Lys-168 forms a Glycyl lysine isopeptide (Lys-Gly) (interchain with G-Cter in SUMO2) linkage. Disordered stretches follow at residues 315–370 (LEME…DEDE) and 405–447 (SEES…GRRE). A compositionally biased stretch (basic and acidic residues) spans 342–352 (CRRESALRKNQ). A phosphoserine mark is found at Ser-354 and Ser-366. Residues 414 to 430 (RSDRRQENRKPSDKKPL) are compositionally biased toward basic and acidic residues. Over residues 433–442 (WSYNANQHST) the composition is skewed to polar residues. At Ser-478 the chain carries Phosphoserine. Residues 495–524 (IKAEMMGNMELAEQLKAQLKEANKFKETQM) are a coiled coil. Lys-597 participates in a covalent cross-link: Glycyl lysine isopeptide (Lys-Gly) (interchain with G-Cter in SUMO2). A Phosphoserine modification is found at Ser-622.

This sequence belongs to the CWF19 family.

This chain is CWF19-like protein 2 (Cwf19l2), found in Mus musculus (Mouse).